Here is a 328-residue protein sequence, read N- to C-terminus: Aspartate carbamoyltransferase catalytic subunit (328 aa).

Carbamoyl phosphate-binding residues include R70 and T71. Position 98 (K98) interacts with L-aspartate. Residues R120, H150, and Q153 each coordinate carbamoyl phosphate. L-aspartate-binding residues include R183 and R238. G279 and P280 together coordinate carbamoyl phosphate.

Belongs to the aspartate/ornithine carbamoyltransferase superfamily. ATCase family. In terms of assembly, heterododecamer (2C3:3R2) of six catalytic PyrB chains organized as two trimers (C3), and six regulatory PyrI chains organized as three dimers (R2).

The enzyme catalyses carbamoyl phosphate + L-aspartate = N-carbamoyl-L-aspartate + phosphate + H(+). The protein operates within pyrimidine metabolism; UMP biosynthesis via de novo pathway; (S)-dihydroorotate from bicarbonate: step 2/3. Functionally, catalyzes the condensation of carbamoyl phosphate and aspartate to form carbamoyl aspartate and inorganic phosphate, the committed step in the de novo pyrimidine nucleotide biosynthesis pathway. The sequence is that of Aspartate carbamoyltransferase catalytic subunit from Methylococcus capsulatus (strain ATCC 33009 / NCIMB 11132 / Bath).